A 208-amino-acid chain; its full sequence is Probable GTP-binding protein EngB (208 aa).

The region spanning 23 to 205 (LTSEMVILGR…RQTLLKYLLT (183 aa)) is the EngB-type G domain. Residues 31–38 (GRSNVGKS), 57–61 (GKTRL), 84–87 (DLPG), 154–157 (TKFD), and 182–184 (FNA) each bind GTP. Ser-38 and Thr-59 together coordinate Mg(2+).

The protein belongs to the TRAFAC class TrmE-Era-EngA-EngB-Septin-like GTPase superfamily. EngB GTPase family. Mg(2+) serves as cofactor.

Functionally, necessary for normal cell division and for the maintenance of normal septation. The chain is Probable GTP-binding protein EngB from Helicobacter pylori (strain J99 / ATCC 700824) (Campylobacter pylori J99).